Here is a 201-residue protein sequence, read N- to C-terminus: Recombination protein RecR (201 aa).

The C4-type zinc finger occupies 60 to 75; sequence CHACGNVDTSDPCTIC. The region spanning 83–178 is the Toprim domain; sequence TTLVVVEDVS…TITRLAHGVP (96 aa).

This sequence belongs to the RecR family.

May play a role in DNA repair. It seems to be involved in an RecBC-independent recombinational process of DNA repair. It may act with RecF and RecO. The protein is Recombination protein RecR of Methylorubrum populi (strain ATCC BAA-705 / NCIMB 13946 / BJ001) (Methylobacterium populi).